A 188-amino-acid polypeptide reads, in one-letter code: UPF0397 protein LACR_0367 (188 aa).

Transmembrane regions (helical) follow at residues 14-34 (IVVATGIGAALFVIIGWLINI), 48-68 (AVLALFSALFGPLAGFLIGFI), 80-100 (APWWTWVLGSGLMGLFLGFGV), 120-140 (IVQFLANVVVWGLIAPIGDIL), and 152-172 (QGVVAGLVNALTIAVAGTLLL).

It belongs to the UPF0397 family.

The protein localises to the cell membrane. The protein is UPF0397 protein LACR_0367 of Lactococcus lactis subsp. cremoris (strain SK11).